We begin with the raw amino-acid sequence, 467 residues long: uncharacterized protein (467 aa).

Sel1-like repeat units follow at residues proline 38–histidine 73, proline 107–asparagine 138, proline 139–leucine 172, proline 173–tyrosine 208, proline 240–histidine 275, proline 276–serine 311, alanine 343–histidine 378, serine 379–aspartate 414, and serine 415–tyrosine 450.

This is an uncharacterized protein from Neisseria meningitidis serogroup B (strain ATCC BAA-335 / MC58).